Here is a 325-residue protein sequence, read N- to C-terminus: Necdin (325 aa).

2 disordered regions span residues Met-1–Val-69 and Ala-77–Pro-96. The MAGE domain occupies Leu-102 to Ala-301.

Binds to the transactivation domains of E2F1 and p53. Binds also SV40 large T antigen and adenovirus E1A. Interacts with nucleobindin 1 and 2. Brain specific. Not detected in other tissues. Expressed in postmitotic neurons. In adult brain the highest expression is in hypothalamus. Highly expressed in thalamus and midbrain. Relatively low levels are in cerebral cortex, hippocampus, striatum, olfactory bulb, cerebellum, pons and spinal cord. Also detected in neurally differentiated embryonal carcinoma cells.

Its subcellular location is the cytoplasm. The protein resides in the nucleus. The protein localises to the nucleoplasm. It is found in the nucleus matrix. Functionally, growth suppressor that facilitates the entry of the cell into cell cycle arrest. Functionally similar to the retinoblastoma protein it binds to and represses the activity of cell-cycle-promoting proteins such as SV40 large T antigen, adenovirus E1A, and the transcription factor E2F. Necdin also interacts with p53 and works in an additive manner to inhibit cell growth. Also functions as a transcription factor and directly binds to specific guanosine-rich DNA sequences. In Mus musculus (Mouse), this protein is Necdin (Ndn).